A 240-amino-acid chain; its full sequence is LOB domain-containing protein 39 (240 aa).

Residues 1 to 107 form the LOB domain; the sequence is MSCNGCRVLR…VETVLRGGTL (107 aa). Residues 200–233 form a disordered region; that stretch reads GDRPGSPSEESVTTSCWENGMRGDNKQKRNKGEK. Residues 207 to 216 are compositionally biased toward polar residues; that stretch reads SEESVTTSCW.

Belongs to the LOB domain-containing protein family. In terms of tissue distribution, expressed in young shoots, roots, stems, leaves and flowers.

This is LOB domain-containing protein 39 (LBD39) from Arabidopsis thaliana (Mouse-ear cress).